The sequence spans 47 residues: uncharacterized protein (47 aa).

The N-terminal stretch at 1–25 (MAHKCASAKLLSGIMALLFNGKSLL) is a signal peptide.

This is an uncharacterized protein from Saccharomyces cerevisiae (strain ATCC 204508 / S288c) (Baker's yeast).